The chain runs to 258 residues: Imidazole glycerol phosphate synthase subunit HisF (258 aa).

Residues Asp-11 and Asp-130 contribute to the active site.

The protein belongs to the HisA/HisF family. In terms of assembly, heterodimer of HisH and HisF.

Its subcellular location is the cytoplasm. The catalysed reaction is 5-[(5-phospho-1-deoxy-D-ribulos-1-ylimino)methylamino]-1-(5-phospho-beta-D-ribosyl)imidazole-4-carboxamide + L-glutamine = D-erythro-1-(imidazol-4-yl)glycerol 3-phosphate + 5-amino-1-(5-phospho-beta-D-ribosyl)imidazole-4-carboxamide + L-glutamate + H(+). It functions in the pathway amino-acid biosynthesis; L-histidine biosynthesis; L-histidine from 5-phospho-alpha-D-ribose 1-diphosphate: step 5/9. In terms of biological role, IGPS catalyzes the conversion of PRFAR and glutamine to IGP, AICAR and glutamate. The HisF subunit catalyzes the cyclization activity that produces IGP and AICAR from PRFAR using the ammonia provided by the HisH subunit. This chain is Imidazole glycerol phosphate synthase subunit HisF, found in Klebsiella pneumoniae (strain 342).